Reading from the N-terminus, the 441-residue chain is Phosphoribosylamine--glycine ligase (441 aa).

In terms of domain architecture, ATP-grasp spans 112–319 (RNFMKKYGIE…FTEIMSAVVK (208 aa)). 139–196 (IEKLGDVAVKPSGLTGGKGVKVMGDQLPDLKAAKDYTSELLEKGPVVIEERFIGEEFT) is a binding site for ATP. Positions 277, 289, and 291 each coordinate Mg(2+). Gln277, Glu289, and Asn291 together coordinate Mn(2+).

It belongs to the GARS family. Requires Mg(2+) as cofactor. It depends on Mn(2+) as a cofactor.

The enzyme catalyses 5-phospho-beta-D-ribosylamine + glycine + ATP = N(1)-(5-phospho-beta-D-ribosyl)glycinamide + ADP + phosphate + H(+). It participates in purine metabolism; IMP biosynthesis via de novo pathway; N(1)-(5-phospho-D-ribosyl)glycinamide from 5-phospho-alpha-D-ribose 1-diphosphate: step 2/2. The sequence is that of Phosphoribosylamine--glycine ligase from Methanosarcina acetivorans (strain ATCC 35395 / DSM 2834 / JCM 12185 / C2A).